The primary structure comprises 306 residues: uncharacterized protein (306 aa).

Residues 40-156 form a disordered region; sequence HETCSTPGED…AVASASAPTE (117 aa). Residues 64-73 are compositionally biased toward low complexity; sequence EGINLGEEGL. Residues 129–139 are compositionally biased toward basic residues; sequence KQHKKAKKRKS.

This is an uncharacterized protein from Rattus norvegicus (Rat).